The following is a 549-amino-acid chain: Glucose-6-phosphate isomerase (549 aa).

Residues Lys-80, Lys-228, and Lys-234 each carry the N6-acetyllysine modification. The active-site Proton donor is Glu-355. Active-site residues include His-386 and Lys-514.

This sequence belongs to the GPI family.

It is found in the cytoplasm. The catalysed reaction is alpha-D-glucose 6-phosphate = beta-D-fructose 6-phosphate. The protein operates within carbohydrate biosynthesis; gluconeogenesis. Its pathway is carbohydrate degradation; glycolysis; D-glyceraldehyde 3-phosphate and glycerone phosphate from D-glucose: step 2/4. In terms of biological role, catalyzes the reversible isomerization of glucose-6-phosphate to fructose-6-phosphate. This chain is Glucose-6-phosphate isomerase, found in Shigella flexneri.